Reading from the N-terminus, the 605-residue chain is Membrane protein insertase YidC (605 aa).

The helical transmembrane segment at 8–28 (MIIAIALSLAVLLGWNYFVAA) threads the bilayer. Residues 35–47 (RQQQAQTSASPSP) show a composition bias toward low complexity. Residues 35-71 (RQQQAQTSASPSPKEGGPSAPVPGTLPGASGGNPQAA) form a disordered region. Helical transmembrane passes span 377–397 (LFGN…LFFL), 451–471 (WPVV…FVTI), 496–516 (LFGL…WPIV), and 540–560 (FTFM…GLVI).

The protein belongs to the OXA1/ALB3/YidC family. Type 1 subfamily. Interacts with the Sec translocase complex via SecD. Specifically interacts with transmembrane segments of nascent integral membrane proteins during membrane integration.

It is found in the cell inner membrane. Its function is as follows. Required for the insertion and/or proper folding and/or complex formation of integral membrane proteins into the membrane. Involved in integration of membrane proteins that insert both dependently and independently of the Sec translocase complex, as well as at least some lipoproteins. Aids folding of multispanning membrane proteins. This is Membrane protein insertase YidC from Methylobacterium nodulans (strain LMG 21967 / CNCM I-2342 / ORS 2060).